Here is a 563-residue protein sequence, read N- to C-terminus: Cytochrome P450 monooxygenase efuG (563 aa).

A helical membrane pass occupies residues 10–30 (ITSHQWGIGSVFLLISIPLIV). A disordered region spans residues 462 to 482 (PDDPQSGPRKDAKKQKAKSDG). Residue Cys505 participates in heme binding.

This sequence belongs to the cytochrome P450 family. Requires heme as cofactor.

Its subcellular location is the membrane. It participates in secondary metabolite biosynthesis; terpenoid biosynthesis. Functionally, cytochrome P450 monooxygenase; part of the gene cluster that mediates the biosynthesis of enfumafungin, a glycosylated fernene-type triterpenoid with potent antifungal activity, mediated by its interaction with beta-1,3-glucan synthase and the fungal cell wall. The pathway begins with the terpene cyclase-glycosyl transferase fusion protein that most likely uses 2,3-oxidosqualene as substrate and catalyzes glycosylation immediately after cyclization. The fernene glycoside then could be processed by the desaturase efuI which catalyzes isomerization of a double bond established by efuA to form the core structure. The latter would then undergo a series of hydroxylations in unknown order at C-2, C-19, C-23 and C-25, which would be catalyzed by two of the three cytochrome P450 monooxygenases efuB, efuG or efuH. The hydroxy-group at C-25 becomes oxidized by the dehydrogenase efuE to enable a spontaneous, non-enzymatic hemiacetal formation with C-23. After hydroxylation at C-2, acetylation by the acetyltransferase efuC takes place. The final steps in enfumafungin biosynthesis require expansion of the 5-membered ring by lactonization via a Baeyer-Villiger reaction mediated by one of the BGC's cytochrome P450 monooxygenases (efuB, efuG or efuH) followed by ring cleavage. This type of reaction would establish a double bond between C-20 and C-21 which could be reduced by the reductase efuL to form the final product. The polypeptide is Cytochrome P450 monooxygenase efuG (Hormonema carpetanum).